Consider the following 59-residue polypeptide: U-actitoxin-Aer2b (59 aa).

Post-translationally, contains 5 disulfide bonds.

Its subcellular location is the secreted. The protein localises to the nematocyst. The protein is U-actitoxin-Aer2b of Anemonia erythraea (Sea anemone).